The chain runs to 377 residues: Succinyl-diaminopimelate desuccinylase (377 aa).

His67 contributes to the Zn(2+) binding site. The active site involves Asp69. Asp100 is a Zn(2+) binding site. Catalysis depends on Glu134, which acts as the Proton acceptor. Zn(2+) contacts are provided by Glu135, Glu163, and His349.

Belongs to the peptidase M20A family. DapE subfamily. In terms of assembly, homodimer. Requires Zn(2+) as cofactor. It depends on Co(2+) as a cofactor.

It catalyses the reaction N-succinyl-(2S,6S)-2,6-diaminopimelate + H2O = (2S,6S)-2,6-diaminopimelate + succinate. Its pathway is amino-acid biosynthesis; L-lysine biosynthesis via DAP pathway; LL-2,6-diaminopimelate from (S)-tetrahydrodipicolinate (succinylase route): step 3/3. Its function is as follows. Catalyzes the hydrolysis of N-succinyl-L,L-diaminopimelic acid (SDAP), forming succinate and LL-2,6-diaminopimelate (DAP), an intermediate involved in the bacterial biosynthesis of lysine and meso-diaminopimelic acid, an essential component of bacterial cell walls. The protein is Succinyl-diaminopimelate desuccinylase of Shewanella frigidimarina (strain NCIMB 400).